Consider the following 218-residue polypeptide: Glutathione S-transferase Mu 1 (218 aa).

The GST N-terminal domain maps to 2–88; the sequence is PMILGYWNVR…YLARKHHLDG (87 aa). Glutathione is bound at residue 7–8; sequence YW. Phosphothreonine is present on threonine 34. Glutathione-binding positions include 43 to 46, lysine 50, and 59 to 60; these read RSQW and NL. Serine 67 is subject to Phosphoserine. 72–73 provides a ligand contact to glutathione; the sequence is QS. A GST C-terminal domain is found at 90-208; it reads TEEERIRADI…KSSRYIATPI (119 aa). Tyrosine 116 is a binding site for substrate. Serine 210 carries the phosphoserine modification.

Homodimer.

It is found in the cytoplasm. The enzyme catalyses RX + glutathione = an S-substituted glutathione + a halide anion + H(+). It catalyses the reaction prostaglandin A2 + glutathione = prostaglandin A2-S-(R)-glutathione. The catalysed reaction is prostaglandin J2 + glutathione = prostaglandin J2-S-(R)-glutathione. It carries out the reaction prostaglandin J2 + glutathione = prostaglandin J2-S-(S)-glutathione. The enzyme catalyses prostaglandin A2 + glutathione = prostaglandin A2-S-(S)-glutathione. It catalyses the reaction 11(S)-hydroxy-14(S),15(S)-epoxy-(5Z,8Z,12E)-eicosatrienoate + glutathione = (11S,15S)-dihydroxy-14(R)-S-glutathionyl-(5Z,8Z,12E)-eicosatrienoate. Its function is as follows. Conjugation of reduced glutathione to a wide number of exogenous and endogenous hydrophobic electrophiles. Involved in the formation of glutathione conjugates of both prostaglandin A2 (PGA2) and prostaglandin J2 (PGJ2). Participates in the formation of novel hepoxilin regioisomers. The protein is Glutathione S-transferase Mu 1 of Mus musculus (Mouse).